Reading from the N-terminus, the 375-residue chain is Venom allergen 5 (375 aa).

Positions methionine 1 to serine 26 are cleaved as a signal peptide. Residues valine 66–tyrosine 210 form the SCP domain. 2 N-linked (GlcNAc...) asparagine glycosylation sites follow: asparagine 300 and asparagine 366.

This sequence belongs to the CRISP family. Venom allergen 5-like subfamily. In terms of processing, contains 9 disulfide bonds. In terms of tissue distribution, expressed by the venom gland.

It is found in the secreted. The polypeptide is Venom allergen 5 (Lycosa singoriensis (Wolf spider)).